The sequence spans 338 residues: Methionine import ATP-binding protein MetN 1 (338 aa).

In terms of domain architecture, ABC transporter spans 2–241 (IELHQVSKSF…AKHATTKRFV (240 aa)). 38 to 45 (GYSGAGKS) is an ATP binding site.

Belongs to the ABC transporter superfamily. Methionine importer (TC 3.A.1.24) family. As to quaternary structure, the complex is composed of two ATP-binding proteins (MetN), two transmembrane proteins (MetI) and a solute-binding protein (MetQ).

The protein localises to the cell membrane. It carries out the reaction L-methionine(out) + ATP + H2O = L-methionine(in) + ADP + phosphate + H(+). It catalyses the reaction D-methionine(out) + ATP + H2O = D-methionine(in) + ADP + phosphate + H(+). Functionally, part of the ABC transporter complex MetNIQ involved in methionine import. Responsible for energy coupling to the transport system. This is Methionine import ATP-binding protein MetN 1 from Listeria monocytogenes serotype 4b (strain F2365).